The chain runs to 270 residues: Phosphatidylglycerol--prolipoprotein diacylglyceryl transferase (270 aa).

4 consecutive transmembrane segments (helical) span residues 18-38 (IAVH…LWLA), 55-75 (LVLF…VIFQ), 89-109 (IWNG…TGII), and 115-135 (GLSF…GQAI). Arginine 137 provides a ligand contact to a 1,2-diacyl-sn-glycero-3-phospho-(1'-sn-glycerol). The next 3 membrane-spanning stretches (helical) occupy residues 177-197 (QPTF…LLLL), 205-225 (GELF…IEGL), and 236-256 (LRIA…LIAY).

This sequence belongs to the Lgt family.

It is found in the cell membrane. The catalysed reaction is L-cysteinyl-[prolipoprotein] + a 1,2-diacyl-sn-glycero-3-phospho-(1'-sn-glycerol) = an S-1,2-diacyl-sn-glyceryl-L-cysteinyl-[prolipoprotein] + sn-glycerol 1-phosphate + H(+). Its pathway is protein modification; lipoprotein biosynthesis (diacylglyceryl transfer). Functionally, catalyzes the transfer of the diacylglyceryl group from phosphatidylglycerol to the sulfhydryl group of the N-terminal cysteine of a prolipoprotein, the first step in the formation of mature lipoproteins. The protein is Phosphatidylglycerol--prolipoprotein diacylglyceryl transferase of Bacillus licheniformis (strain ATCC 14580 / DSM 13 / JCM 2505 / CCUG 7422 / NBRC 12200 / NCIMB 9375 / NCTC 10341 / NRRL NRS-1264 / Gibson 46).